The chain runs to 801 residues: MIFSKHLLSHFVDISHLDIEQMCMRLSSMGLEVESAYPLKMPQKVVVGKILSLTPHPDADKLNVCKVSIGSQELQIVCGANNVKANQYVAVALEGAVIPHTKSGEIVIKQTNLRGIESCGMLCSSVELGLPKINDGIMVLDSTAGHLELGVELGNLPLFNDYVIEVGITPNRGDCLSVLGIARELATSYDLRLKHEVDMDNVVTLGLGRVLQILCDEKIEAHLLYRVVEVKQAYLPLDIALCLARNGSLVDDIMCNFLEYGTYMTGVILNAYKLYDCENKDIVLDNGLVAQLRIKKDENGLGAVFAHQKLSIIGVSYGERHFGTRSEIYIIEASYVNPTLIAKSLYKHAIKGDVQLTYRSTRGSNPNLEQGIDFLCRKMVLVSDALVYSGSHNIVQNIDEITIKTTFKAINQIIGIELDKEEIATILKRLNFKLDATCDENFFMVTVPNYRHDIQSIQDVAEEVLRIYGIDNVSSVPLLCSQSHNINNTYFTYKNTRKLAYGLIAYGFVECIHYVFASSQNLERLGFVRLDEDLELLNPITNELDTLRTSLLPAMLDSVKRNENLGFKNITLFEIGSVYSSKREEKSKLALVASGCMQDECYPHTKAVKWNLFAFGTICQRCVGDLSFRNIRDEANAKELLSHFCFTDERLLHPYQSAFVYQKDKPIGIIAKLHPQVATNMDLSEEIFICEIEIGMSDFSLPQAYEFSKYQKSTRDLTILIDKDIPFYRVRQILLEDQIAYVKNIYPIDVYYDKALGEKMALSIRIVLQSDEGTLQEMQLVQAVESVLSVLVREFDAVLRT.

Positions 39–154 (LKMPQKVVVG…GHLELGVELG (116 aa)) constitute a tRNA-binding domain. Residues 398-475 (IDEITIKTTF…RIYGIDNVSS (78 aa)) enclose the B5 domain. The Mg(2+) site is built by D453, D459, E462, and E463. In terms of domain architecture, FDX-ACB spans 708 to 800 (SKYQKSTRDL…LVREFDAVLR (93 aa)).

Belongs to the phenylalanyl-tRNA synthetase beta subunit family. Type 1 subfamily. In terms of assembly, tetramer of two alpha and two beta subunits. Mg(2+) serves as cofactor.

Its subcellular location is the cytoplasm. It carries out the reaction tRNA(Phe) + L-phenylalanine + ATP = L-phenylalanyl-tRNA(Phe) + AMP + diphosphate + H(+). The polypeptide is Phenylalanine--tRNA ligase beta subunit (Helicobacter hepaticus (strain ATCC 51449 / 3B1)).